The following is a 323-amino-acid chain: Peroxisomal targeting signal 2 receptor (323 aa).

WD repeat units lie at residues 65-96 (DWND…QLWD), 109-141 (EHAQ…KLWD), 153-184 (GHES…RIWD), 196-227 (AHQA…RGWD), 240-271 (GHTY…RFWN), and 284-315 (HHTE…KIYD).

It belongs to the WD repeat peroxin-7 family. Interacts with PEX5; interaction only takes place when PEX7 is associated with cargo proteins. Interacts with VWA8. Ubiquitous. Highest expression in pancreas, skeletal muscle and heart.

The protein resides in the cytoplasm. Its subcellular location is the cytosol. The protein localises to the peroxisome matrix. Functionally, receptor required for the peroxisomal import of proteins containing a C-terminal PTS2-type peroxisomal targeting signal. Specifically binds to cargo proteins containing a PTS2 peroxisomal targeting signal in the cytosol. Cargo protein-binding triggers interaction with PEX5 and formation of a ternary complex composed of PEX5 and PEX7 along with PTS2-containing cargo proteins, which is tranlocated into peroxisomes by passing through the PEX13-PEX14 docking complex. The sequence is that of Peroxisomal targeting signal 2 receptor from Homo sapiens (Human).